The chain runs to 326 residues: H-2 class I histocompatibility antigen, Q8 alpha chain (326 aa).

The N-terminal stretch at 1 to 21 is a signal peptide; that stretch reads MALTMLLLLVAAALTLIETRA. The interval 22–111 is alpha-1; it reads GPHSLRYFHT…AQRYYNQSKG (90 aa). Residues 22–305 lie on the Extracellular side of the membrane; the sequence is GPHSLRYFHT…EPPPSTVSNM (284 aa). Asn107 carries N-linked (GlcNAc...) asparagine glycosylation. Positions 112–203 are alpha-2; sequence GSHTLQWMYG…QLRKETLLCT (92 aa). 2 disulfide bridges follow: Cys122–Cys185 and Cys224–Cys280. The interval 204-295 is alpha-3; sequence DPPKAHVTHH…GLPEPLTLRW (92 aa). The Ig-like C1-type domain occupies 206–294; that stretch reads PKAHVTHHPR…EGLPEPLTLR (89 aa). N-linked (GlcNAc...) asparagine glycosylation occurs at Asn277. The tract at residues 296–305 is connecting peptide; that stretch reads EPPPSTVSNM. The helical transmembrane segment at 306–326 threads the bilayer; the sequence is ANVAILVVLVAWPSLELWWIL.

Belongs to the MHC class I family. Heterodimer of an alpha chain and a beta chain (beta-2-microglobulin).

Its subcellular location is the membrane. Functionally, involved in the presentation of foreign antigens to the immune system. In Mus musculus (Mouse), this protein is H-2 class I histocompatibility antigen, Q8 alpha chain (H2-Q8).